We begin with the raw amino-acid sequence, 141 residues long: Nucleoside triphosphatase NudI (141 aa).

A Nudix hydrolase domain is found at 1-141 (MRQRTIVCPL…RHTLALKGLL (141 aa)). The Nudix box motif lies at 38-59 (GGVEPGERIEEALRREVREELG).

This sequence belongs to the Nudix hydrolase family. NudI subfamily. In terms of assembly, monomer. Requires Mg(2+) as cofactor.

It carries out the reaction a ribonucleoside 5'-triphosphate + H2O = a ribonucleoside 5'-phosphate + diphosphate + H(+). It catalyses the reaction a 2'-deoxyribonucleoside 5'-triphosphate + H2O = a 2'-deoxyribonucleoside 5'-phosphate + diphosphate + H(+). The catalysed reaction is dUTP + H2O = dUMP + diphosphate + H(+). The enzyme catalyses dTTP + H2O = dTMP + diphosphate + H(+). It carries out the reaction dCTP + H2O = dCMP + diphosphate + H(+). Its function is as follows. Catalyzes the hydrolysis of nucleoside triphosphates, with a preference for pyrimidine deoxynucleoside triphosphates (dUTP, dTTP and dCTP). The chain is Nucleoside triphosphatase NudI from Salmonella agona (strain SL483).